The sequence spans 370 residues: Cysteine-type anaerobic sulfatase-maturating enzyme (370 aa).

One can recognise a Radical SAM core domain in the interval 1–227 (MPPLSLLIKP…LKNLFDFWYE (227 aa)). [4Fe-4S] cluster is bound by residues cysteine 15 and cysteine 19. Tyrosine 21 lines the S-adenosyl-L-methionine pocket. Cysteine 22 serves as a coordination point for [4Fe-4S] cluster. Glycine 66, serine 122, arginine 134, and leucine 195 together coordinate S-adenosyl-L-methionine. Residues cysteine 255, cysteine 261, and cysteine 276 each contribute to the [4Fe-4S] cluster site. The Proton acceptor role is filled by aspartate 277. [4Fe-4S] cluster is bound by residues cysteine 317, cysteine 320, cysteine 326, cysteine 330, and cysteine 348.

This sequence belongs to the radical SAM superfamily. Anaerobic sulfatase-maturating enzyme family. Monomer. The cofactor is [4Fe-4S] cluster.

It carries out the reaction L-cysteinyl-[sulfatase] + S-adenosyl-L-methionine + H2O = 3-oxo-L-alanyl-[sulfatase] + hydrogen sulfide + 5'-deoxyadenosine + L-methionine + 2 H(+). It participates in protein modification; sulfatase oxidation. In terms of biological role, involved in 'Cys-type' sulfatase maturation under anaerobic conditions. Catalyzes the post-translational modification of cysteine ('Cys-51' in the arylsulfatase CPF_0221) into 3-oxoalanine (also known as C(alpha)-formylglycine (FGly)), by a free radical chemical mechanism initiated via the reductive cleavage of S-adenosyl-L-methionine (SAM). Is also able to oxidize a serine residue in a synthetic substrate to FGly in vitro, and in a serine variant of a Cys-type sulfatase in vivo, but this activity is not physiological. Converts threonyl peptides to the corresponding ketone product, and also allo-threonyl peptides, but with a significantly reduced efficiency. The protein is Cysteine-type anaerobic sulfatase-maturating enzyme of Clostridium perfringens (strain ATCC 13124 / DSM 756 / JCM 1290 / NCIMB 6125 / NCTC 8237 / Type A).